Consider the following 563-residue polypeptide: Glucocorticoid modulatory element-binding protein 1 (563 aa).

Ala2 bears the N-acetylalanine mark. The SAND domain occupies 72 to 156 (ASTIEANEDM…RKMMDSGQID (85 aa)). Cys103 lines the Zn(2+) pocket. 4 residues coordinate DNA: Lys129, Lys133, Lys136, and Arg147. Positions 160, 164, and 168 each coordinate Zn(2+). Residues 304-355 (MDTVKKVLDNRKNQVEQGEEQFLYTLTDLERQLEEQKKQAQDHRLKSQTVQN) adopt a coiled-coil conformation. The tract at residues 360-385 (PVSTPKPPKRPRLQRPASTTVLSPSP) is disordered.

As to quaternary structure, homodimer, and heterodimer of GMEB1 and GMEB2. Interacts with TRIM63. Interacts with the glucocorticoid receptor (NR3C1) and NCOA2/TIF2. May interact with HSP27 and CREB-binding protein (CBP).

It localises to the nucleus. The protein localises to the cytoplasm. Functionally, trans-acting factor that binds to glucocorticoid modulatory elements (GME) present in the TAT (tyrosine aminotransferase) promoter and increases sensitivity to low concentrations of glucocorticoids. Also binds to the transferrin receptor promoter. The protein is Glucocorticoid modulatory element-binding protein 1 (GMEB1) of Bos taurus (Bovine).